Reading from the N-terminus, the 478-residue chain is Microfibrillar-associated protein 1 (478 aa).

The span at 1–20 (MSAATAAAAASGIQSTAGAI) shows a compositional bias: low complexity. Disordered stretches follow at residues 1-276 (MSAA…RRAT) and 456-478 (NEHAGGMRQQFDKPTGSKRKKME). Residues 53–62 (SSEESDDDDF) are compositionally biased toward acidic residues. Over residues 107-128 (DDPRLRRLRQRPVDMEDMERER) the composition is skewed to basic and acidic residues. A compositionally biased stretch (acidic residues) spans 140–153 (IMESDSEDEEEDEG). A compositionally biased stretch (polar residues) spans 160–170 (RGTNKITLASE). Residues 171–181 (SDTDAELSDTE) show a composition bias toward acidic residues. Basic and acidic residues predominate over residues 197-212 (QREEEVLQKEDEKQSE). Positions 214 to 231 (SESESSEYEEETESEEDN) are enriched in acidic residues. An interaction with Prp38 region spans residues 229–478 (EDNEPRLKPL…PTGSKRKKME (250 aa)). The span at 245–268 (RATIQEKEREAQKQKQLEAEAKRA) shows a compositional bias: basic and acidic residues.

The protein belongs to the MFAP1 family. Component of the spliceosome B complex. Interacts (via C-terminus) with Prp38.

The protein resides in the nucleus. In terms of biological role, required for pre-mRNA splicing. This chain is Microfibrillar-associated protein 1, found in Drosophila melanogaster (Fruit fly).